The chain runs to 75 residues: Conotoxin ar11a (75 aa).

An N-terminal signal peptide occupies residues 1–19 (MKLCATFLLVLVTLPLVTG). The propeptide occupies 20 to 36 (EKSSERSLSGAILRGVR). 4 cysteine pairs are disulfide-bonded: C39-C53, C46-C58, C52-C63, and C57-C70.

In terms of tissue distribution, expressed by the venom duct.

It is found in the secreted. Functionally, both natural (L-Leu form) and synthetic (D-Leu from) peptides equally cause sensitivity to touch and body tremor. Neither L-Leu form nor D-Leu form is active on nerve-muscle preparation. This is Conotoxin ar11a from Conus arenatus (Sand-dusted cone).